The following is a 533-amino-acid chain: E3 ubiquitin-protein ligase MGRN1 (533 aa).

Gly-2 carries the N-myristoyl glycine lipid modification. The segment at Glu-278–Cys-317 adopts an RING-type zinc-finger fold. Positions Pro-385 to Pro-388 match the Required for TSG101-binding motif. Position 390 is a phosphotyrosine (Tyr-390). The interval Gln-421–Leu-519 is disordered. The span at Gly-423–Ser-439 shows a compositional bias: polar residues. A phosphoserine mark is found at Ser-429, Ser-450, and Ser-502. Residues Glu-443–Glu-454 are compositionally biased toward acidic residues.

As to quaternary structure, interacts with MC1R and MC4R. Interacts with TSG101. Interacts with mislocalized cytosolically exposed PRNP; this interaction alters MGRN1 subcellular location and causes lysosomal enlargement. Autoubiquitinated in vitro.

It is found in the cytoplasm. The protein localises to the cytosol. It localises to the cell membrane. Its subcellular location is the early endosome. It carries out the reaction S-ubiquitinyl-[E2 ubiquitin-conjugating enzyme]-L-cysteine + [acceptor protein]-L-lysine = [E2 ubiquitin-conjugating enzyme]-L-cysteine + N(6)-ubiquitinyl-[acceptor protein]-L-lysine.. It functions in the pathway protein modification; protein ubiquitination. Its function is as follows. E3 ubiquitin-protein ligase. Mediates TSG101 monoubiquitination at multiple sites. Plays a role in the regulation of endosome-to-lysosome trafficking. Impairs MC1R- and MC4R-signaling by competing with GNAS-binding to MCRs and inhibiting agonist-induced cAMP production. Does not inhibit ADRB2-signaling. Does not promote MC1R ubiquitination. Also acts as a negative regulator of hedgehog signaling. The protein is E3 ubiquitin-protein ligase MGRN1 (Mgrn1) of Rattus norvegicus (Rat).